The chain runs to 158 residues: NAD(P)H-quinone oxidoreductase subunit J, chloroplastic (158 aa).

The protein belongs to the complex I 30 kDa subunit family. In terms of assembly, NDH is composed of at least 16 different subunits, 5 of which are encoded in the nucleus.

The protein localises to the plastid. It localises to the chloroplast thylakoid membrane. It catalyses the reaction a plastoquinone + NADH + (n+1) H(+)(in) = a plastoquinol + NAD(+) + n H(+)(out). It carries out the reaction a plastoquinone + NADPH + (n+1) H(+)(in) = a plastoquinol + NADP(+) + n H(+)(out). Its function is as follows. NDH shuttles electrons from NAD(P)H:plastoquinone, via FMN and iron-sulfur (Fe-S) centers, to quinones in the photosynthetic chain and possibly in a chloroplast respiratory chain. The immediate electron acceptor for the enzyme in this species is believed to be plastoquinone. Couples the redox reaction to proton translocation, and thus conserves the redox energy in a proton gradient. The sequence is that of NAD(P)H-quinone oxidoreductase subunit J, chloroplastic from Ceratophyllum demersum (Rigid hornwort).